Reading from the N-terminus, the 545-residue chain is Probable protein kinase UbiB (545 aa).

Positions 123-501 (DFEPIALASA…QIKQRQSQYL (379 aa)) constitute a Protein kinase domain. ATP is bound by residues 129 to 137 (LASASIAQV) and Lys-152. Residue Asp-287 is the Proton acceptor of the active site. The chain crosses the membrane as a helical span at residues 508-528 (LFLCGSLFLLSGLANIPWLFI).

This sequence belongs to the ABC1 family. UbiB subfamily.

Its subcellular location is the cell inner membrane. The protein operates within cofactor biosynthesis; ubiquinone biosynthesis [regulation]. Its function is as follows. Is probably a protein kinase regulator of UbiI activity which is involved in aerobic coenzyme Q (ubiquinone) biosynthesis. In Photorhabdus laumondii subsp. laumondii (strain DSM 15139 / CIP 105565 / TT01) (Photorhabdus luminescens subsp. laumondii), this protein is Probable protein kinase UbiB.